We begin with the raw amino-acid sequence, 512 residues long: MQLNPSEISDLIKSRIQNLQLAATSRNEGTVVSVTDGITRVHGLADVMQGEMLEFPGNTFGLALNLERDSVGAVVLGEYEHITEGDPVKATGRILEVPVGPELIGRVVNALGQPIDGKGPINAKLTDKIEKVAPGVIWRQSVSQPVQTGLKSVDAMVPIGRGQRELIIGDRQTGKTAVAVDAIINQKGQDMFCVYVAIGQKASTIANVVRKLEEHGAMEYTIVVAATASESAAMQFIAPYSGCTMGEYFRDRGQDALIIYDDLTKQAWAYRQISLLLRRPPGREAYPGDVFYLHSRLLERASRVSADHVEKFTNGEVKGKTGSLTALPIIETQAGDVSAFVPTNVISITDGQIFLDTDLFNAGIRPAINAGISVSRVGGAAQTKVIKKLSGGIRTDLAQYRELAAFAQFASDLDDATRKQLERGRRVTELMKQPQYAPLSVADMAITLYAVNNGYFDDVEVPRLLAFESGLQQYVKAKNPALVTKIMTSKELDADGEKQLVAVIDEFKKSWA.

Residue 169 to 176 coordinates ATP; that stretch reads GDRQTGKT.

It belongs to the ATPase alpha/beta chains family. In terms of assembly, F-type ATPases have 2 components, CF(1) - the catalytic core - and CF(0) - the membrane proton channel. CF(1) has five subunits: alpha(3), beta(3), gamma(1), delta(1), epsilon(1). CF(0) has three main subunits: a(1), b(2) and c(9-12). The alpha and beta chains form an alternating ring which encloses part of the gamma chain. CF(1) is attached to CF(0) by a central stalk formed by the gamma and epsilon chains, while a peripheral stalk is formed by the delta and b chains.

It localises to the cell inner membrane. It carries out the reaction ATP + H2O + 4 H(+)(in) = ADP + phosphate + 5 H(+)(out). Produces ATP from ADP in the presence of a proton gradient across the membrane. The alpha chain is a regulatory subunit. The sequence is that of ATP synthase subunit alpha from Aromatoleum aromaticum (strain DSM 19018 / LMG 30748 / EbN1) (Azoarcus sp. (strain EbN1)).